A 218-amino-acid polypeptide reads, in one-letter code: Cytochrome b6 (218 aa).

A helical membrane pass occupies residues 35-55; that stretch reads IFYCLGGITLVCFLIQFATGF. Cysteine 38 lines the heme c pocket. Heme b-binding residues include histidine 89 and histidine 103. Transmembrane regions (helical) follow at residues 93-113, 119-139, and 189-209; these read ASMM…TGGF, LTWV…VTGY, and LHTF…FLMI. Residues histidine 190 and histidine 205 each contribute to the heme b site.

This sequence belongs to the cytochrome b family. PetB subfamily. The 4 large subunits of the cytochrome b6-f complex are cytochrome b6, subunit IV (17 kDa polypeptide, PetD), cytochrome f and the Rieske protein, while the 4 small subunits are PetG, PetL, PetM and PetN. The complex functions as a dimer. Heme b serves as cofactor. The cofactor is heme c.

It localises to the cellular thylakoid membrane. Its function is as follows. Component of the cytochrome b6-f complex, which mediates electron transfer between photosystem II (PSII) and photosystem I (PSI), cyclic electron flow around PSI, and state transitions. This chain is Cytochrome b6, found in Synechococcus sp. (strain CC9605).